The sequence spans 47 residues: Small ribosomal subunit protein uS14 (47 aa).

Residues Cys-12, Cys-15, Cys-30, and Cys-33 each contribute to the Zn(2+) site.

It belongs to the universal ribosomal protein uS14 family. Zinc-binding uS14 subfamily. Part of the 30S ribosomal subunit. The cofactor is Zn(2+).

Functionally, binds 16S rRNA, required for the assembly of 30S particles. This Methanosphaera stadtmanae (strain ATCC 43021 / DSM 3091 / JCM 11832 / MCB-3) protein is Small ribosomal subunit protein uS14.